We begin with the raw amino-acid sequence, 440 residues long: Dynein axonemal assembly factor 11 (440 aa).

LRR repeat units lie at residues 20-43 (IFSL…HKWC), 44-65 (RDLK…VGRL), 66-89 (KKLE…GCES), and 90-110 (LQKL…ETLK). Residues 128–146 (YQGYRQYVVATVPQLQSLD) form the LRRCT domain. The segment covering 178-192 (EEREKQKSNANEHPE) has biased composition (basic and acidic residues). Disordered regions lie at residues 178–267 (EERE…RTLI) and 363–440 (PKKR…PPLM). Positions 193-211 (INQSLSESQNGTQQYPESS) are enriched in polar residues. Basic and acidic residues predominate over residues 236 to 259 (SRLEAHRHLEEKRRANEKEKEKPK). The 99-residue stretch at 276 to 374 (VNEPKLDFSL…KRTIRPTSVT (99 aa)) folds into the CS domain. Positions 369-378 (RPTSVTSNQN) are enriched in polar residues. Basic and acidic residues-rich tracts occupy residues 379–392 (NKKD…RELL) and 420–431 (GLEERPVSKDFV).

It belongs to the tilB family. As to quaternary structure, interacts with dvl2. Interacts with kur. Expressed in kinocilia of hair cells.

Its subcellular location is the cytoplasm. It is found in the dynein axonemal particle. The protein localises to the cell projection. The protein resides in the cilium. In terms of biological role, plays a crucial role in regulating cilia motility in pronephric tubules, cloaca and neural tube. Required for establishing left-right asymmetry of the body plan; controls cell fate and convergent extension (CE) movements during gastrulation, respectively, via the Wnt and the planar cell polarity (PCP) signaling pathways. Required for the proper development of renal glomeruli and tubules. The protein is Dynein axonemal assembly factor 11 (dnaaf11) of Danio rerio (Zebrafish).